Consider the following 347-residue polypeptide: Ornithine transcarbamylase, mitochondrial (347 aa).

The transit peptide at M1–K25 directs the protein to the mitochondrion. Carbamoyl phosphate-binding positions include S84–T87, R135, H162, and Q165. L-ornithine-binding residues include N194, D258, S262, and M263. The Proton acceptor role is filled by C300. Carbamoyl phosphate-binding positions include C300–L301 and R328.

The protein belongs to the aspartate/ornithine carbamoyltransferase superfamily. OTCase family.

It localises to the mitochondrion matrix. It carries out the reaction carbamoyl phosphate + L-ornithine = L-citrulline + phosphate + H(+). The protein operates within amino-acid biosynthesis; L-arginine biosynthesis; L-arginine from L-ornithine and carbamoyl phosphate: step 1/3. The sequence is that of Ornithine transcarbamylase, mitochondrial (OTC) from Pachysolen tannophilus (Yeast).